The primary structure comprises 243 residues: UPF0246 protein SAK_2020 (243 aa).

The protein belongs to the UPF0246 family.

The sequence is that of UPF0246 protein SAK_2020 from Streptococcus agalactiae serotype Ia (strain ATCC 27591 / A909 / CDC SS700).